We begin with the raw amino-acid sequence, 1129 residues long: DNA-directed RNA polymerase I subunit RPA2 (1129 aa).

Residues 1061–1093 form a C4-type zinc finger; it reads CHKCGSILAPLQRIVKRNETGGLSSQPDTCRLC.

It belongs to the RNA polymerase beta chain family. In terms of assembly, component of the RNA polymerase I (Pol I) complex consisting of at least 13 subunits.

It localises to the nucleus. The protein resides in the nucleolus. It carries out the reaction RNA(n) + a ribonucleoside 5'-triphosphate = RNA(n+1) + diphosphate. DNA-dependent RNA polymerase catalyzes the transcription of DNA into RNA using the four ribonucleoside triphosphates as substrates. Second largest core component of RNA polymerase I which synthesizes ribosomal RNA precursors. Proposed to contribute to the polymerase catalytic activity and forms the polymerase active center together with the largest subunit. Pol I is composed of mobile elements and RPA2 is part of the core element with the central large cleft and probably a clamp element that moves to open and close the cleft. This Drosophila melanogaster (Fruit fly) protein is DNA-directed RNA polymerase I subunit RPA2.